Reading from the N-terminus, the 975-residue chain is Nesprin-3 (975 aa).

Residues 1 to 925 (MTQQPQDDFD…LGSLFRRACC (925 aa)) are Cytoplasmic-facing. One copy of the Spectrin 1 repeat lies at 220-325 (REHEEYQAGV…WEEEEERLRG (106 aa)). Residues 617 to 645 (NHQHKMDQLSSDFQALQRSLEDLVDRCRQ) are a coiled coil. A Spectrin 2 repeat occupies 647 to 740 (VQEHCTFSHQ…RELAESWRAL (94 aa)). The 59-residue stretch at 917–975 (GSLFRRACCVALPLQLLLLLFLLLLFLLPIREEDRSCTLANNFARSFTLMLRYNGPPPT) folds into the KASH domain. Residues 926–946 (VALPLQLLLLLFLLLLFLLPI) traverse the membrane as a helical; Anchor for type IV membrane protein segment. The Perinuclear space portion of the chain corresponds to 947 to 975 (REEDRSCTLANNFARSFTLMLRYNGPPPT).

It belongs to the nesprin family. In terms of assembly, core component of LINC complexes which are composed of inner nuclear membrane SUN domain-containing proteins coupled to outer nuclear membrane KASH domain-containing nesprins. SUN and KASH domain-containing proteins seem to bind each other promiscuously; however, differentially expression of LINC complex constituents can give rise to specific assemblies. Interacts with SUN1 and SUN2; probably forming respective LINC complexes. Interacts with PLEC (via actin-binding domain). Interacts with DST. Interacts with SYNE1 via spectrin repeats. Interacts (via KASH domain) with TOR1A (ATP-bound); the interaction is required for SYNE3 nuclear envelope localization. In terms of processing, the disulfid bond with SUN1 or SUN2 is required for stability of the respective LINC complex under tensile forces. Expressed in aortic endothelial cells (at protein level).

It localises to the nucleus outer membrane. The protein resides in the nucleus envelope. The protein localises to the rough endoplasmic reticulum. Its function is as follows. As a component of the LINC (LInker of Nucleoskeleton and Cytoskeleton) complex involved in the connection between the nuclear lamina and the cytoskeleton. The nucleocytoplasmic interactions established by the LINC complex play an important role in the transmission of mechanical forces across the nuclear envelope and in nuclear movement and positioning. Probable anchoring protein which tethers the nucleus to the cytoskeleton by binding PLEC which can associate with the intermediate filament system. Plays a role in the regulation of aortic epithelial cell morphology, and is required for flow-induced centrosome polarization and directional migration in aortic endothelial cells. The sequence is that of Nesprin-3 from Homo sapiens (Human).